A 211-amino-acid polypeptide reads, in one-letter code: Uracil phosphoribosyltransferase (211 aa).

5-phospho-alpha-D-ribose 1-diphosphate-binding positions include R78, R103, and D130 to T138. Residues I195 and G200 to A202 each bind uracil. D201 is a binding site for 5-phospho-alpha-D-ribose 1-diphosphate.

The protein belongs to the UPRTase family. The cofactor is Mg(2+).

It carries out the reaction UMP + diphosphate = 5-phospho-alpha-D-ribose 1-diphosphate + uracil. It participates in pyrimidine metabolism; UMP biosynthesis via salvage pathway; UMP from uracil: step 1/1. Its activity is regulated as follows. Allosterically activated by GTP. Catalyzes the conversion of uracil and 5-phospho-alpha-D-ribose 1-diphosphate (PRPP) to UMP and diphosphate. This is Uracil phosphoribosyltransferase from Kocuria rhizophila (strain ATCC 9341 / DSM 348 / NBRC 103217 / DC2201).